Here is a 146-residue protein sequence, read N- to C-terminus: Angiogenin (146 aa).

An N-terminal signal peptide occupies residues 1–24 (MVMGLHLLLLVFILGLGLTPPTLA). Position 25 is a pyrrolidone carboxylic acid (Gln-25). Residue His-37 is the Proton acceptor of the active site. 3 disulfide bridges follow: Cys-50–Cys-105, Cys-63–Cys-116, and Cys-81–Cys-131. The Nucleolar localization signal motif lies at 55-59 (RLRNM). Cys-105 lines the tRNA pocket. Residue His-138 is the Proton donor of the active site.

Belongs to the pancreatic ribonuclease family. In terms of assembly, homodimer. Interacts with RNH1; inhibiting ANG ribonuclease activity. Interacts with PCNA.

It localises to the secreted. The protein resides in the nucleus. Its subcellular location is the nucleolus. The protein localises to the cytoplasm. It is found in the stress granule. Its activity is regulated as follows. Has weak tRNA ribonuclease activity by itself due to partial autoinhibition by its C-terminus, which folds into a short alpha-helix that partially occludes the substrate-binding site. In absence of stress, the ribonuclease activity is inhibited by RNH1 in the cytoplasm. In response to stress, dissociates from RNH1 in the cytoplasm and associates with cytoplasmic ribosomes with vacant A-sites: ribosomes directly activate the tRNA ribonuclease activity of ANG by refolding the C-terminal alpha-helix. In response to stress, the angiogenic activity of ANG is inhibited by RNH1 in the nucleus. Secreted ribonuclease that can either promote or restrict cell proliferation of target cells, depending on the context. Endocytosed in target cells via its receptor PLXNB2 and translocates to the cytoplasm or nucleus. Under stress conditions, localizes to the cytoplasm and promotes the assembly of stress granules (SGs): specifically cleaves a subset of tRNAs within anticodon loops to produce tRNA-derived stress-induced fragments (tiRNAs), resulting in translation repression and inhibition of cell proliferation. tiRNas also prevent formation of apoptosome, thereby promoting cell survival. Preferentially cleaves RNAs between a pyrimidine and an adenosine residue, suggesting that it cleaves the anticodon loop of tRNA(Ala) (32-UUAGCAU-38) after positions 33 and 36. Cleaves a subset of tRNAs, including tRNA(Ala), tRNA(Glu), tRNA(Gly), tRNA(Lys), tRNA(Val), tRNA(His), tRNA(Asp) and tRNA(Sec). Under growth conditions and in differentiated cells, translocates to the nucleus and stimulates ribosomal RNA (rRNA) transcription, including that containing the initiation site sequences of 45S rRNA, thereby promoting cell growth and proliferation. Angiogenin induces vascularization of normal and malignant tissues via its ability to promote rRNA transcription. Involved in hematopoietic stem and progenitor cell (HSPC) growth and survival by promoting rRNA transcription in growth conditions and inhibiting translation in response to stress, respectively. Mediates the crosstalk between myeloid and intestinal epithelial cells to protect the intestinal epithelial barrier integrity: secreted by myeloid cells and promotes intestinal epithelial cells proliferation and survival. Also mediates osteoclast-endothelial cell crosstalk in growing bone: produced by osteoclasts and protects the neighboring vascular cells against senescence by promoting rRNA transcription. The protein is Angiogenin (ANG) of Aotus trivirgatus (Three-striped night monkey).